Here is a 510-residue protein sequence, read N- to C-terminus: Bifunctional pantoate ligase/cytidylate kinase (510 aa).

The tract at residues 1-276 (MKKVIIRKTE…CGETRLIDHV (276 aa)) is pantoate--beta-alanine ligase. An ATP-binding site is contributed by 29–36 (MGNLHNGH). His-36 acts as the Proton donor in catalysis. Gln-61 serves as a coordination point for (R)-pantoate. Gln-61 is a binding site for beta-alanine. 150–153 (GEKD) is an ATP binding site. A (R)-pantoate-binding site is contributed by Gln-156. 187 to 190 (LSSR) lines the ATP pocket. The tract at residues 277 to 510 (FLMKRSPIIA…DKIPKETQIR (234 aa)) is cytidylate kinase.

In the N-terminal section; belongs to the pantothenate synthetase family. The protein in the C-terminal section; belongs to the cytidylate kinase family. Type 1 subfamily.

It localises to the cytoplasm. It carries out the reaction (R)-pantoate + beta-alanine + ATP = (R)-pantothenate + AMP + diphosphate + H(+). The enzyme catalyses CMP + ATP = CDP + ADP. It catalyses the reaction dCMP + ATP = dCDP + ADP. Its pathway is cofactor biosynthesis; (R)-pantothenate biosynthesis; (R)-pantothenate from (R)-pantoate and beta-alanine: step 1/1. Functionally, catalyzes the condensation of pantoate with beta-alanine in an ATP-dependent reaction via a pantoyl-adenylate intermediate. Catalyzes the transfer of a phosphate group from ATP to either CMP or dCMP to form CDP or dCDP and ADP, respectively. The sequence is that of Bifunctional pantoate ligase/cytidylate kinase from Prochlorococcus marinus (strain MIT 9312).